We begin with the raw amino-acid sequence, 842 residues long: Glycogen phosphorylase, muscle form (842 aa).

N-acetylserine is present on S2. Position 15 is a phosphoserine; by PHK; in form phosphorylase A (S15). 2 residues coordinate AMP: D43 and Y76. A phosphotyrosine mark is found at Y204 and Y227. 310–319 (RRFKSSKFGC) provides a ligand contact to AMP. The residue at position 430 (S430) is a Phosphoserine. The residue at position 473 (Y473) is a Phosphotyrosine. At S514 the chain carries Phosphoserine. At K681 the chain carries N6-(pyridoxal phosphate)lysine. Phosphoserine occurs at positions 747 and 748.

Belongs to the glycogen phosphorylase family. Homodimer. Homotetramer; to form the enzymatically active phosphorylase A. Requires pyridoxal 5'-phosphate as cofactor. Post-translationally, phosphorylation of Ser-15 converts phosphorylase B (unphosphorylated) to phosphorylase A.

The enzyme catalyses [(1-&gt;4)-alpha-D-glucosyl](n) + phosphate = [(1-&gt;4)-alpha-D-glucosyl](n-1) + alpha-D-glucose 1-phosphate. Its activity is regulated as follows. Allosterically regulated through the non-covalent binding of metabolites, being activated by AMP and inhibited by ATP, ADP, and glucose-6-phosphate. The activity is also controlled by post-translational modifications including phosphorylation. Allosteric enzyme that catalyzes the rate-limiting step in glycogen catabolism, the phosphorolytic cleavage of glycogen to produce glucose-1-phosphate, and plays a central role in maintaining cellular and organismal glucose homeostasis. The chain is Glycogen phosphorylase, muscle form from Macaca fascicularis (Crab-eating macaque).